Consider the following 101-residue polypeptide: ATP synthase subunit c (101 aa).

Transmembrane regions (helical) follow at residues 28–48 (SVVA…VGMG) and 72–92 (MFIA…IALI).

It belongs to the ATPase C chain family. F-type ATPases have 2 components, F(1) - the catalytic core - and F(0) - the membrane proton channel. F(1) has five subunits: alpha(3), beta(3), gamma(1), delta(1), epsilon(1). F(0) has three main subunits: a(1), b(2) and c(10-14). The alpha and beta chains form an alternating ring which encloses part of the gamma chain. F(1) is attached to F(0) by a central stalk formed by the gamma and epsilon chains, while a peripheral stalk is formed by the delta and b chains.

Its subcellular location is the cell inner membrane. Functionally, f(1)F(0) ATP synthase produces ATP from ADP in the presence of a proton or sodium gradient. F-type ATPases consist of two structural domains, F(1) containing the extramembraneous catalytic core and F(0) containing the membrane proton channel, linked together by a central stalk and a peripheral stalk. During catalysis, ATP synthesis in the catalytic domain of F(1) is coupled via a rotary mechanism of the central stalk subunits to proton translocation. Key component of the F(0) channel; it plays a direct role in translocation across the membrane. A homomeric c-ring of between 10-14 subunits forms the central stalk rotor element with the F(1) delta and epsilon subunits. In Sulfurovum sp. (strain NBC37-1), this protein is ATP synthase subunit c.